Reading from the N-terminus, the 328-residue chain is Lactamase-like protein nscB (328 aa).

Zn(2+)-binding residues include His-97, His-99, Asp-101, and His-102. The active-site Proton donor/acceptor is Asp-101.

This sequence belongs to the metallo-beta-lactamase superfamily. Zn(2+) serves as cofactor.

It functions in the pathway secondary metabolite biosynthesis. Functionally, lactamase-like protein; part of the gene cluster that mediates the biosynthesis of neosartoricin, a prenylated anthracenone that exhibits T-cell antiproliferative activity, suggestive of a physiological role as an immunosuppressive agent. The non-reducing polyketide synthase nscA probably synthesizes and cyclizes the decaketide backbone. The hydrolase nscB then mediates the product release through hydrolysis followed by spontaneous decarboxylation. The prenyltransferase nscD catalyzes the addition of the dimethylallyl group to the aromatic C5. The FAD-dependent monooxygenase nscC is then responsible for the stereospecific hydroxylation at C2. There is no gene encoding O-acetyltransferase in the nsc gene cluster; thus, the last step of 2-O-acetylation leading to neosartoricin may be catalyzed by an unidentified O-acetyltransferase. This is Lactamase-like protein nscB from Neosartorya fischeri (strain ATCC 1020 / DSM 3700 / CBS 544.65 / FGSC A1164 / JCM 1740 / NRRL 181 / WB 181) (Aspergillus fischerianus).